Reading from the N-terminus, the 146-residue chain is Large ribosomal subunit protein uL15 (146 aa).

Residues 1–51 (MKLHELQPAPGSRKKAVRVGRGIGSGNGKTSGRGQKGQNARSGGGVRLGFE) are disordered. Gly residues-rich tracts occupy residues 21 to 35 (RGIGSGNGKTSGRGQ) and 42 to 51 (SGGGVRLGFE).

Belongs to the universal ribosomal protein uL15 family. As to quaternary structure, part of the 50S ribosomal subunit.

Functionally, binds to the 23S rRNA. In Geobacillus kaustophilus (strain HTA426), this protein is Large ribosomal subunit protein uL15.